We begin with the raw amino-acid sequence, 165 residues long: Large ribosomal subunit protein mL49 (165 aa).

A compositionally biased stretch (low complexity) spans 42–75; it reads TTATTTTPLQQQQQQQPTTQPTTPIQTQTGAAPT. The interval 42-81 is disordered; sequence TTATTTTPLQQQQQQQPTTQPTTPIQTQTGAAPTESTKPV.

Belongs to the mitochondrion-specific ribosomal protein mL49 family. In terms of assembly, component of the mitochondrial large ribosomal subunit (mt-LSU). Mature N.crassa 74S mitochondrial ribosomes consist of a small (37S) and a large (54S) subunit. The 37S small subunit contains a 16S ribosomal RNA (16S mt-rRNA) and 32 different proteins. The 54S large subunit contains a 23S rRNA (23S mt-rRNA) and 42 different proteins.

The protein localises to the mitochondrion. Component of the mitochondrial ribosome (mitoribosome), a dedicated translation machinery responsible for the synthesis of mitochondrial genome-encoded proteins, including at least some of the essential transmembrane subunits of the mitochondrial respiratory chain. The mitoribosomes are attached to the mitochondrial inner membrane and translation products are cotranslationally integrated into the membrane. The protein is Large ribosomal subunit protein mL49 (img2) of Neurospora crassa (strain ATCC 24698 / 74-OR23-1A / CBS 708.71 / DSM 1257 / FGSC 987).